The following is a 97-amino-acid chain: Large ribosomal subunit protein bL28 (97 aa).

The protein belongs to the bacterial ribosomal protein bL28 family.

This is Large ribosomal subunit protein bL28 from Rickettsia prowazekii (strain Madrid E).